A 484-amino-acid polypeptide reads, in one-letter code: PTS system MurNAc-GlcNAc-specific EIIBC component (484 aa).

Positions Gln5–Asp87 constitute a PTS EIIB type-1 domain. Cys27 acts as the Phosphocysteine intermediate; for EIIB activity in catalysis. Residues Lys130–Asp484 form the PTS EIIC type-1 domain. The next 10 membrane-spanning stretches (helical) occupy residues Ile135–Val155, Met160–Ile180, Phe200–Ala220, Leu234–Val254, Ile274–Val294, Ile305–Val325, Leu349–Val369, Ala384–Leu404, Phe408–Ile428, and Leu450–Phe470.

It is found in the cell membrane. It catalyses the reaction N-acetyl-beta-D-muramate-(1-&gt;4)-N-acetyl-D-glucosamine(out) + N(pros)-phospho-L-histidyl-[protein] = 6-phospho-N-acetyl-beta-D-muramate-(1-&gt;4)-N-acetyl-D-glucosamine(in) + L-histidyl-[protein]. Its pathway is cell wall biogenesis; peptidoglycan recycling. Its function is as follows. The phosphoenolpyruvate-dependent sugar phosphotransferase system (sugar PTS), a major carbohydrate active transport system, catalyzes the phosphorylation of incoming sugar substrates concomitantly with their translocation across the cell membrane. This system is involved in the uptake and phosphorylation of MurNAc-GlcNAc, the principle peptidoglycan turnover product of S.aureus, yielding cytoplasmic MurNAc 6P-GlcNAc. This Staphylococcus aureus (strain Mu50 / ATCC 700699) protein is PTS system MurNAc-GlcNAc-specific EIIBC component.